A 61-amino-acid chain; its full sequence is Putative antitoxin APE_0472b.1 (61 aa).

It belongs to the UPF0165 family.

In terms of biological role, possibly the antitoxin component of a type II toxin-antitoxin (TA) system. The chain is Putative antitoxin APE_0472b.1 from Aeropyrum pernix (strain ATCC 700893 / DSM 11879 / JCM 9820 / NBRC 100138 / K1).